The primary structure comprises 134 residues: Iron-sulfur cluster insertion protein ErpA (134 aa).

Iron-sulfur cluster contacts are provided by cysteine 47, cysteine 126, and cysteine 128.

The protein belongs to the HesB/IscA family. In terms of assembly, homodimer. It depends on iron-sulfur cluster as a cofactor.

Functionally, required for insertion of 4Fe-4S clusters for at least IspG. This chain is Iron-sulfur cluster insertion protein ErpA, found in Coxiella burnetii (strain Dugway 5J108-111).